The chain runs to 440 residues: GTPase Der (440 aa).

2 EngA-type G domains span residues 4 to 169 and 178 to 353; these read PVVA…PEED and IKVA…DQAA. GTP is bound by residues 10–17, 57–61, 120–123, 184–191, 231–235, and 296–299; these read GRPNVGKS, DTGGI, NKVD, GKPNVGKS, DTAGI, and NKWD. The KH-like domain maps to 354–438; it reads MRISTGVLND…PIKFILREKE (85 aa).

The protein belongs to the TRAFAC class TrmE-Era-EngA-EngB-Septin-like GTPase superfamily. EngA (Der) GTPase family. In terms of assembly, associates with the 50S ribosomal subunit.

Its function is as follows. GTPase that plays an essential role in the late steps of ribosome biogenesis. In Acetivibrio thermocellus (strain ATCC 27405 / DSM 1237 / JCM 9322 / NBRC 103400 / NCIMB 10682 / NRRL B-4536 / VPI 7372) (Clostridium thermocellum), this protein is GTPase Der.